Reading from the N-terminus, the 327-residue chain is Cytochrome c oxidase subunit 2 (327 aa).

The signal sequence occupies residues 1–23 (MEQIPASIWTLTAGVVVTLISFW). 2 helical membrane passes run 56-78 (LFLV…AGEE) and 96-114 (AIPA…DIFQ). 4 residues coordinate Cu cation: histidine 221, cysteine 255, cysteine 259, and histidine 263.

It belongs to the cytochrome c oxidase subunit 2 family. Cu cation serves as cofactor.

It is found in the cell membrane. It catalyses the reaction 4 Fe(II)-[cytochrome c] + O2 + 8 H(+)(in) = 4 Fe(III)-[cytochrome c] + 2 H2O + 4 H(+)(out). Subunits I and II form the functional core of the enzyme complex. Electrons originating in cytochrome c are transferred via heme a and Cu(A) to the binuclear center formed by heme a3 and Cu(B). The chain is Cytochrome c oxidase subunit 2 (ctaC) from Thermostichus vulcanus (Synechococcus vulcanus).